The chain runs to 890 residues: uncharacterized protein (890 aa).

A signal peptide spans 1 to 20; that stretch reads MKILKSLVLLVLFMAMPAKA. Transmembrane regions (helical) follow at residues 518 to 538, 567 to 587, 613 to 633, 651 to 671, 684 to 704, and 775 to 795; these read AALTLYVTIFGLMFVAGALKL, TYFFSAFTNGIDFFVTNVVGA, LLFIELLQIHNGLAFIAIITI, VIAFIGLTVMISLAPFFIILM, ISTLLSYVVQPTILLIFFLLI, and FLVLFTTALLFYSYCLMSYGL. A disordered region spans residues 860–890; that stretch reads KARKPEGGEHTNKFLAERNDVPKKEEGERKE. Residues 862–890 are compositionally biased toward basic and acidic residues; the sequence is RKPEGGEHTNKFLAERNDVPKKEEGERKE.

It belongs to the TrbL/VirB6 family.

The protein localises to the cell membrane. This is an uncharacterized protein from Rickettsia felis (strain ATCC VR-1525 / URRWXCal2) (Rickettsia azadi).